A 472-amino-acid chain; its full sequence is Zinc finger and BTB domain-containing protein 18.2 (472 aa).

A BTB domain is found at 24–91 (CDCTVLVGEA…MYEGKLEFSN (68 aa)). The span at 127-149 (KIIDDGEKDDKPVDSEEHHEHSF) shows a compositional bias: basic and acidic residues. Disordered regions lie at residues 127 to 155 (KIID…SQQK), 197 to 236 (AGKT…FKPM), and 269 to 334 (DLLS…LSTS). A compositionally biased stretch (low complexity) spans 205-215 (SSPSSPLSQRS). A compositionally biased stretch (polar residues) spans 279–288 (AKSPKSQQVG). Positions 309 to 319 (HTREDDLYQDR) are enriched in basic and acidic residues. C2H2-type zinc fingers lie at residues 344 to 366 (CICP…LSSH), 384 to 406 (PTCT…ERTH), 412 to 434 (FTCG…AVVH), and 440 to 463 (HACK…RKFH).

This sequence belongs to the krueppel C2H2-type zinc-finger protein family. ZBTB18 subfamily.

Its subcellular location is the nucleus. Its function is as follows. Transcriptional repressor that plays a role in various developmental processes. Specifically binds the consensus DNA sequence 5'-[AC]ACATCTG[GT][AC]-3' which contains the E box core, and acts by recruiting chromatin remodeling multiprotein complexes. This chain is Zinc finger and BTB domain-containing protein 18.2 (zbtb18.2), found in Xenopus laevis (African clawed frog).